Here is a 598-residue protein sequence, read N- to C-terminus: Proline--tRNA ligase (598 aa).

The protein belongs to the class-II aminoacyl-tRNA synthetase family. ProS type 1 subfamily. In terms of assembly, homodimer.

It is found in the cytoplasm. It carries out the reaction tRNA(Pro) + L-proline + ATP = L-prolyl-tRNA(Pro) + AMP + diphosphate. In terms of biological role, catalyzes the attachment of proline to tRNA(Pro) in a two-step reaction: proline is first activated by ATP to form Pro-AMP and then transferred to the acceptor end of tRNA(Pro). As ProRS can inadvertently accommodate and process non-cognate amino acids such as alanine and cysteine, to avoid such errors it has two additional distinct editing activities against alanine. One activity is designated as 'pretransfer' editing and involves the tRNA(Pro)-independent hydrolysis of activated Ala-AMP. The other activity is designated 'posttransfer' editing and involves deacylation of mischarged Ala-tRNA(Pro). The misacylated Cys-tRNA(Pro) is not edited by ProRS. The sequence is that of Proline--tRNA ligase from Rippkaea orientalis (strain PCC 8801 / RF-1) (Cyanothece sp. (strain PCC 8801)).